The following is a 284-amino-acid chain: Cytochrome P450 2C31 (284 aa).

Residue Cys229 participates in heme binding.

Belongs to the cytochrome P450 family. The cofactor is heme.

The protein localises to the endoplasmic reticulum membrane. It localises to the microsome membrane. It carries out the reaction an organic molecule + reduced [NADPH--hemoprotein reductase] + O2 = an alcohol + oxidized [NADPH--hemoprotein reductase] + H2O + H(+). Its function is as follows. Cytochromes P450 are a group of heme-thiolate monooxygenases. In liver microsomes, this enzyme is involved in an NADPH-dependent electron transport pathway. It oxidizes a variety of structurally unrelated compounds, including steroids, fatty acids, and xenobiotics. In Capra hircus aegagrus (Wild goat), this protein is Cytochrome P450 2C31 (CYP2C31).